Consider the following 310-residue polypeptide: DDRGK domain-containing protein 1 (310 aa).

Residues 1-21 (MAAIIYLAIAAVASILLFVAV) traverse the membrane as a helical segment. At 22–310 (KLLSTDTKTE…DSPAEISVNA (289 aa)) the chain is on the cytoplasmic side. Disordered stretches follow at residues 38–85 (VGEL…DEYQ) and 110–162 (KAEK…LKEE). Over residues 52–70 (PRARARRGLRNKTNRSKTQ) the composition is skewed to basic residues. Over residues 76–85 (DYDDYDDEYQ) the composition is skewed to acidic residues.

The protein belongs to the DDRGK1 family.

It localises to the endoplasmic reticulum membrane. Functionally, substrate adapter for ufmylation, the covalent attachment of the ubiquitin-like modifier UFM1 to substrate proteins. The protein is DDRGK domain-containing protein 1 of Trichoplax adhaerens (Trichoplax reptans).